Reading from the N-terminus, the 354-residue chain is Polyribonucleotide 5'-hydroxyl-kinase PF0112 (354 aa).

Position 36–43 (36–43 (GDVDTGKT)) interacts with ATP.

A divalent metal cation serves as cofactor.

It catalyses the reaction a 5'-end dephospho-2'-deoxyribonucleoside-DNA + ATP = a 5'-end 5'-phospho-2'-deoxyribonucleoside-DNA + ADP + H(+). The enzyme catalyses a 5'-end dephospho-ribonucleoside-RNA + ATP = a 5'-end 5'-phospho-ribonucleoside-RNA + ADP + H(+). Its function is as follows. Polynucleotide kinase that can phosphorylate the 5'-hydroxyl groups of both single-stranded RNA (ssRNA) and single-stranded DNA (ssDNA). Exhibits a strong preference for ssRNA. This is Polyribonucleotide 5'-hydroxyl-kinase PF0112 from Pyrococcus furiosus (strain ATCC 43587 / DSM 3638 / JCM 8422 / Vc1).